The sequence spans 209 residues: Thiamine-phosphate synthase (209 aa).

Residues 32-36 (QLRMK) and Asp-64 each bind 4-amino-2-methyl-5-(diphosphooxymethyl)pyrimidine. 2 residues coordinate Mg(2+): Asp-65 and Asp-84. 4-amino-2-methyl-5-(diphosphooxymethyl)pyrimidine is bound at residue Thr-103. Position 129-131 (129-131 (TTT)) interacts with 2-[(2R,5Z)-2-carboxy-4-methylthiazol-5(2H)-ylidene]ethyl phosphate. Lys-132 lines the 4-amino-2-methyl-5-(diphosphooxymethyl)pyrimidine pocket. Gly-165 serves as a coordination point for 2-[(2R,5Z)-2-carboxy-4-methylthiazol-5(2H)-ylidene]ethyl phosphate.

It belongs to the thiamine-phosphate synthase family. The cofactor is Mg(2+).

The catalysed reaction is 2-[(2R,5Z)-2-carboxy-4-methylthiazol-5(2H)-ylidene]ethyl phosphate + 4-amino-2-methyl-5-(diphosphooxymethyl)pyrimidine + 2 H(+) = thiamine phosphate + CO2 + diphosphate. It carries out the reaction 2-(2-carboxy-4-methylthiazol-5-yl)ethyl phosphate + 4-amino-2-methyl-5-(diphosphooxymethyl)pyrimidine + 2 H(+) = thiamine phosphate + CO2 + diphosphate. The enzyme catalyses 4-methyl-5-(2-phosphooxyethyl)-thiazole + 4-amino-2-methyl-5-(diphosphooxymethyl)pyrimidine + H(+) = thiamine phosphate + diphosphate. The protein operates within cofactor biosynthesis; thiamine diphosphate biosynthesis; thiamine phosphate from 4-amino-2-methyl-5-diphosphomethylpyrimidine and 4-methyl-5-(2-phosphoethyl)-thiazole: step 1/1. Its function is as follows. Condenses 4-methyl-5-(beta-hydroxyethyl)thiazole monophosphate (THZ-P) and 2-methyl-4-amino-5-hydroxymethyl pyrimidine pyrophosphate (HMP-PP) to form thiamine monophosphate (TMP). This chain is Thiamine-phosphate synthase, found in Bacteroides thetaiotaomicron (strain ATCC 29148 / DSM 2079 / JCM 5827 / CCUG 10774 / NCTC 10582 / VPI-5482 / E50).